The primary structure comprises 96 residues: UPF0235 protein VV2877 (96 aa).

Belongs to the UPF0235 family.

The chain is UPF0235 protein VV2877 from Vibrio vulnificus (strain YJ016).